The primary structure comprises 286 residues: Polyamine aminopropyltransferase (286 aa).

Residues 6–239 (PVWIDEVFED…GWWSWLYASD (234 aa)) enclose the PABS domain. Gln34 contributes to the S-methyl-5'-thioadenosine binding site. Spermidine contacts are provided by His65 and Asp89. S-methyl-5'-thioadenosine is bound by residues Glu109 and 140-141 (DG). Catalysis depends on Asp159, which acts as the Proton acceptor. 159 to 162 (DGSD) contributes to the spermidine binding site. Position 166 (Pro166) interacts with S-methyl-5'-thioadenosine.

Belongs to the spermidine/spermine synthase family. In terms of assembly, homodimer or homotetramer. Homodimer.

It localises to the cytoplasm. It carries out the reaction S-adenosyl 3-(methylsulfanyl)propylamine + putrescine = S-methyl-5'-thioadenosine + spermidine + H(+). Its pathway is amine and polyamine biosynthesis; spermidine biosynthesis; spermidine from putrescine: step 1/1. Functionally, catalyzes the irreversible transfer of a propylamine group from the amino donor S-adenosylmethioninamine (decarboxy-AdoMet) to putrescine (1,4-diaminobutane) to yield spermidine. This is Polyamine aminopropyltransferase from Synechococcus elongatus (strain ATCC 33912 / PCC 7942 / FACHB-805) (Anacystis nidulans R2).